We begin with the raw amino-acid sequence, 206 residues long: 21.9 kDa heat shock protein (206 aa).

The N-terminal stretch at 1–29 (MAAVAEREVLGMVAAVAAMVVMMAPPAAA) is a signal peptide. Residues 65–187 (EPAAVALARC…GREPRVVAID (123 aa)) enclose the sHSP domain. A Cell attachment site motif is present at residues 94-96 (RGD).

It belongs to the small heat shock protein (HSP20) family. As to quaternary structure, may form oligomeric structures.

It localises to the endoplasmic reticulum. This Oryza sativa subsp. japonica (Rice) protein is 21.9 kDa heat shock protein (HSP21.9).